Reading from the N-terminus, the 364-residue chain is Dihydroorotate dehydrogenase (quinone) (364 aa).

FMN is bound by residues 62-66 (AGFDK) and Thr-86. Residue Lys-66 coordinates substrate. 111–115 (NRMGF) is a substrate binding site. FMN is bound by residues Asn-142 and Asn-175. A substrate-binding site is contributed by Asn-175. Ser-178 acts as the Nucleophile in catalysis. Asn-180 is a binding site for substrate. Lys-216 and Thr-244 together coordinate FMN. 245-246 (NT) contributes to the substrate binding site. FMN contacts are provided by residues Gly-267, Gly-296, and 317–318 (YT).

Belongs to the dihydroorotate dehydrogenase family. Type 2 subfamily. Monomer. FMN serves as cofactor.

It localises to the cell membrane. It catalyses the reaction (S)-dihydroorotate + a quinone = orotate + a quinol. It functions in the pathway pyrimidine metabolism; UMP biosynthesis via de novo pathway; orotate from (S)-dihydroorotate (quinone route): step 1/1. Catalyzes the conversion of dihydroorotate to orotate with quinone as electron acceptor. The polypeptide is Dihydroorotate dehydrogenase (quinone) (Anaeromyxobacter dehalogenans (strain 2CP-C)).